A 475-amino-acid chain; its full sequence is NADH-quinone oxidoreductase subunit N (475 aa).

The next 14 helical transmembrane spans lie at 5 to 25, 32 to 52, 71 to 91, 99 to 119, 121 to 141, 155 to 175, 193 to 213, 232 to 252, 266 to 286, 294 to 314, 322 to 342, 366 to 386, 389 to 409, and 439 to 459; these read LALPEIVLALCGLAILVFGVV, FLSCSMLTIGAFVLTGFLVVM, FMKILSLAGGAFATMLTVGYA, FEFPVLLLFSTLGAMMMASSE, LMTLFIGLELSSLAIYILCAF, YFVLGSLASGLLLYGSSLVYG, STAVPMGLMFGIVFMLAGLTF, PTSVTAYMAGAPKFAAFALLL, WQILVEGVSMLSMLFGSLAAI, LMAYSSIGHMGYALMGLCAGT, LVYLTTYLLMNVGAFAVIIAM, ATAMAIFMFSMAGAPPLAGFF, MMVFYAAINAHLFGLAAIGVV, and LSLSFVSVGMGIATTGFLLVL.

Belongs to the complex I subunit 2 family. In terms of assembly, NDH-1 is composed of 14 different subunits. Subunits NuoA, H, J, K, L, M, N constitute the membrane sector of the complex.

It is found in the cell inner membrane. It carries out the reaction a quinone + NADH + 5 H(+)(in) = a quinol + NAD(+) + 4 H(+)(out). NDH-1 shuttles electrons from NADH, via FMN and iron-sulfur (Fe-S) centers, to quinones in the respiratory chain. The immediate electron acceptor for the enzyme in this species is believed to be ubiquinone. Couples the redox reaction to proton translocation (for every two electrons transferred, four hydrogen ions are translocated across the cytoplasmic membrane), and thus conserves the redox energy in a proton gradient. The chain is NADH-quinone oxidoreductase subunit N from Gluconacetobacter diazotrophicus (strain ATCC 49037 / DSM 5601 / CCUG 37298 / CIP 103539 / LMG 7603 / PAl5).